A 231-amino-acid polypeptide reads, in one-letter code: Large ribosomal subunit protein uL1 (231 aa).

This sequence belongs to the universal ribosomal protein uL1 family. As to quaternary structure, part of the 50S ribosomal subunit.

Functionally, binds directly to 23S rRNA. The L1 stalk is quite mobile in the ribosome, and is involved in E site tRNA release. Protein L1 is also a translational repressor protein, it controls the translation of the L11 operon by binding to its mRNA. The chain is Large ribosomal subunit protein uL1 from Paracidovorax citrulli (strain AAC00-1) (Acidovorax citrulli).